The chain runs to 79 residues: Sec-independent protein translocase protein TatA (79 aa).

Residues 1–21 (MGGFTSIWHWVIVLLVIVLLF) form a helical membrane-spanning segment. A disordered region spans residues 48–79 (EEEAKNEPKTLDAQATQTKAHESSEIKSKQES). Over residues 66–79 (KAHESSEIKSKQES) the composition is skewed to basic and acidic residues.

The protein belongs to the TatA/E family. The Tat system comprises two distinct complexes: a TatABC complex, containing multiple copies of TatA, TatB and TatC subunits, and a separate TatA complex, containing only TatA subunits. Substrates initially bind to the TatABC complex, which probably triggers association of the separate TatA complex to form the active translocon.

It is found in the cell inner membrane. In terms of biological role, part of the twin-arginine translocation (Tat) system that transports large folded proteins containing a characteristic twin-arginine motif in their signal peptide across membranes. TatA could form the protein-conducting channel of the Tat system. The protein is Sec-independent protein translocase protein TatA of Helicobacter pylori (strain P12).